We begin with the raw amino-acid sequence, 120 residues long: Large ribosomal subunit protein uL18 (120 aa).

Belongs to the universal ribosomal protein uL18 family. Part of the 50S ribosomal subunit; part of the 5S rRNA/L5/L18/L25 subcomplex. Contacts the 5S and 23S rRNAs.

Its function is as follows. This is one of the proteins that bind and probably mediate the attachment of the 5S RNA into the large ribosomal subunit, where it forms part of the central protuberance. In Herminiimonas arsenicoxydans, this protein is Large ribosomal subunit protein uL18.